A 115-amino-acid polypeptide reads, in one-letter code: NAD(P)H-quinone oxidoreductase subunit M (115 aa).

This sequence belongs to the complex I NdhM subunit family. As to quaternary structure, NDH-1 can be composed of about 15 different subunits; different subcomplexes with different compositions have been identified which probably have different functions.

The protein resides in the cellular thylakoid membrane. The enzyme catalyses a plastoquinone + NADH + (n+1) H(+)(in) = a plastoquinol + NAD(+) + n H(+)(out). The catalysed reaction is a plastoquinone + NADPH + (n+1) H(+)(in) = a plastoquinol + NADP(+) + n H(+)(out). In terms of biological role, NDH-1 shuttles electrons from an unknown electron donor, via FMN and iron-sulfur (Fe-S) centers, to quinones in the respiratory and/or the photosynthetic chain. The immediate electron acceptor for the enzyme in this species is believed to be plastoquinone. Couples the redox reaction to proton translocation, and thus conserves the redox energy in a proton gradient. Cyanobacterial NDH-1 also plays a role in inorganic carbon-concentration. The chain is NAD(P)H-quinone oxidoreductase subunit M from Prochlorococcus marinus subsp. pastoris (strain CCMP1986 / NIES-2087 / MED4).